The primary structure comprises 95 residues: Probable FAD-linked sulfhydryl oxidase OPG072 (95 aa).

Topologically, residues M1–R8 are intravirion. In terms of domain architecture, ERV/ALR sulfhydryl oxidase spans M1–L95. The chain crosses the membrane as a helical span at residues A9 to G25. Over N26–L95 the chain is Virion surface. An intrachain disulfide couples C43 to C46.

This sequence belongs to the orthopoxvirus OPG072 family. As to quaternary structure, interacts with OPG128; this interaction involves formation of a transient disulfide-bonded intermediate, allowing disulfide bond transfer. FAD serves as cofactor.

It is found in the virion membrane. It localises to the host cytoplasm. The catalysed reaction is 2 R'C(R)SH + O2 = R'C(R)S-S(R)CR' + H2O2. FAD-dependent sulfhydryl oxidase that catalyzes disulfide bond formation. The complete pathway for formation of disulfide bonds in intracellular virion membrane proteins sequentially involves thiol-disulfide transfer between OPG072, OPG128 and OPG088. The sequence is that of Probable FAD-linked sulfhydryl oxidase OPG072 (OPG072) from Vaccinia virus (strain Copenhagen) (VACV).